Reading from the N-terminus, the 626-residue chain is DNA mismatch repair protein MutL (626 aa).

It belongs to the DNA mismatch repair MutL/HexB family.

In terms of biological role, this protein is involved in the repair of mismatches in DNA. It is required for dam-dependent methyl-directed DNA mismatch repair. May act as a 'molecular matchmaker', a protein that promotes the formation of a stable complex between two or more DNA-binding proteins in an ATP-dependent manner without itself being part of a final effector complex. The sequence is that of DNA mismatch repair protein MutL from Pelodictyon phaeoclathratiforme (strain DSM 5477 / BU-1).